Consider the following 58-residue polypeptide: MKEIDLVIDTEEIAEFFYRELARRGYIPSEDELFEIADITFDYLIEKCMIDEELDEDE.

This is an uncharacterized protein from Bacillus subtilis (strain 168).